Consider the following 251-residue polypeptide: Flap endonuclease Xni (251 aa).

D104 contributes to the Mg(2+) binding site. The 90-residue stretch at 160–249 folds into the 5'-3' exonuclease domain; that stretch reads VQPQQLPDYW…IDGNLQQLRL (90 aa). K(+) is bound by residues L171, A172, P180, V182, and I185. An interaction with DNA region spans residues 184-189; that stretch reads GIGPKS.

Belongs to the Xni family. The cofactor is Mg(2+). Requires K(+) as cofactor.

In terms of biological role, has flap endonuclease activity. During DNA replication, flap endonucleases cleave the 5'-overhanging flap structure that is generated by displacement synthesis when DNA polymerase encounters the 5'-end of a downstream Okazaki fragment. This is Flap endonuclease Xni from Shigella flexneri serotype 5b (strain 8401).